Reading from the N-terminus, the 418-residue chain is Serine hydroxymethyltransferase 2 (418 aa).

Residues L121 and 125-127 (GHL) contribute to the (6S)-5,6,7,8-tetrahydrofolate site. Residue K230 is modified to N6-(pyridoxal phosphate)lysine. 355-357 (SPF) is a binding site for (6S)-5,6,7,8-tetrahydrofolate.

The protein belongs to the SHMT family. In terms of assembly, homodimer. Pyridoxal 5'-phosphate serves as cofactor.

Its subcellular location is the cytoplasm. It catalyses the reaction (6R)-5,10-methylene-5,6,7,8-tetrahydrofolate + glycine + H2O = (6S)-5,6,7,8-tetrahydrofolate + L-serine. Its pathway is one-carbon metabolism; tetrahydrofolate interconversion. It participates in amino-acid biosynthesis; glycine biosynthesis; glycine from L-serine: step 1/1. Catalyzes the reversible interconversion of serine and glycine with tetrahydrofolate (THF) serving as the one-carbon carrier. This reaction serves as the major source of one-carbon groups required for the biosynthesis of purines, thymidylate, methionine, and other important biomolecules. Also exhibits THF-independent aldolase activity toward beta-hydroxyamino acids, producing glycine and aldehydes, via a retro-aldol mechanism. This Pseudomonas aeruginosa (strain ATCC 15692 / DSM 22644 / CIP 104116 / JCM 14847 / LMG 12228 / 1C / PRS 101 / PAO1) protein is Serine hydroxymethyltransferase 2.